The sequence spans 124 residues: MPTIQQLIRTERKTLKTKTKSPALRGCPERRGVCTRVYTSTPKKPNSALRKVARVRLTSGFEVTAYIGGIGHNLQEHSVVLLRGGRVKDLPGVRYHIVRGSLDTAGVKDRRQSRSKYGAKSPKE.

At D89 the chain carries 3-methylthioaspartic acid. The segment at 103-124 is disordered; that stretch reads DTAGVKDRRQSRSKYGAKSPKE.

Belongs to the universal ribosomal protein uS12 family. In terms of assembly, part of the 30S ribosomal subunit. Contacts proteins S8 and S17. May interact with IF1 in the 30S initiation complex.

Functionally, with S4 and S5 plays an important role in translational accuracy. Its function is as follows. Interacts with and stabilizes bases of the 16S rRNA that are involved in tRNA selection in the A site and with the mRNA backbone. Located at the interface of the 30S and 50S subunits, it traverses the body of the 30S subunit contacting proteins on the other side and probably holding the rRNA structure together. The combined cluster of proteins S8, S12 and S17 appears to hold together the shoulder and platform of the 30S subunit. This chain is Small ribosomal subunit protein uS12, found in Prochlorococcus marinus (strain NATL2A).